The primary structure comprises 390 residues: GTPase Obg (390 aa).

Residues 1-159 (MKFVDEAAIL…RELMLELLLL (159 aa)) form the Obg domain. The OBG-type G domain occupies 160-333 (ADVGMLGLPN…LCWDVMSFLN (174 aa)). GTP-binding positions include 166–173 (GLPNAGKS), 191–195 (FTTLI), 213–216 (DIPG), 283–286 (NKID), and 314–316 (SAA). The Mg(2+) site is built by S173 and T193. A compositionally biased stretch (acidic residues) spans 364-384 (VEAEAEDDWDDDWDEEDDDGV). Residues 364–390 (VEAEAEDDWDDDWDEEDDDGVEIIYER) form a disordered region.

It belongs to the TRAFAC class OBG-HflX-like GTPase superfamily. OBG GTPase family. In terms of assembly, monomer. Requires Mg(2+) as cofactor.

It localises to the cytoplasm. In terms of biological role, an essential GTPase which binds GTP, GDP and possibly (p)ppGpp with moderate affinity, with high nucleotide exchange rates and a fairly low GTP hydrolysis rate. Plays a role in control of the cell cycle, stress response, ribosome biogenesis and in those bacteria that undergo differentiation, in morphogenesis control. In Yersinia pestis, this protein is GTPase Obg.